A 1249-amino-acid polypeptide reads, in one-letter code: DNA-directed RNA polymerase subunit beta (1249 aa).

It belongs to the RNA polymerase beta chain family. In terms of assembly, the RNAP catalytic core consists of 2 alpha, 1 beta, 1 beta' and 1 omega subunit. When a sigma factor is associated with the core the holoenzyme is formed, which can initiate transcription.

The enzyme catalyses RNA(n) + a ribonucleoside 5'-triphosphate = RNA(n+1) + diphosphate. DNA-dependent RNA polymerase catalyzes the transcription of DNA into RNA using the four ribonucleoside triphosphates as substrates. This Clostridium botulinum (strain Eklund 17B / Type B) protein is DNA-directed RNA polymerase subunit beta.